The sequence spans 279 residues: Tryptophan synthase alpha chain (279 aa).

Residues glutamate 50 and aspartate 61 each act as proton acceptor in the active site.

It belongs to the TrpA family. Tetramer of two alpha and two beta chains.

It carries out the reaction (1S,2R)-1-C-(indol-3-yl)glycerol 3-phosphate + L-serine = D-glyceraldehyde 3-phosphate + L-tryptophan + H2O. It functions in the pathway amino-acid biosynthesis; L-tryptophan biosynthesis; L-tryptophan from chorismate: step 5/5. The alpha subunit is responsible for the aldol cleavage of indoleglycerol phosphate to indole and glyceraldehyde 3-phosphate. The chain is Tryptophan synthase alpha chain from Brucella suis (strain ATCC 23445 / NCTC 10510).